The sequence spans 37 residues: Large ribosomal subunit protein bL36B (37 aa).

The protein belongs to the bacterial ribosomal protein bL36 family.

This chain is Large ribosomal subunit protein bL36B, found in Paenarthrobacter aurescens (strain TC1).